Here is a 397-residue protein sequence, read N- to C-terminus: Proteasome-activating nucleotidase (397 aa).

Residues 15–58 (DYVTFLKRRIRQLELQVRTLEADKERLERELSRLRMEMSRLRQP) adopt a coiled-coil conformation. Residues 182-187 (GCGKTL) and His321 each bind ATP. A docks into pockets in the proteasome alpha-ring to cause gate opening region spans residues 395–397 (MYG).

This sequence belongs to the AAA ATPase family. As to quaternary structure, homohexamer. The hexameric complex has a two-ring architecture resembling a top hat that caps the 20S proteasome core at one or both ends. Upon ATP-binding, the C-terminus of PAN interacts with the alpha-rings of the proteasome core by binding to the intersubunit pockets.

The protein resides in the cytoplasm. Functionally, ATPase which is responsible for recognizing, binding, unfolding and translocation of substrate proteins into the archaeal 20S proteasome core particle. Is essential for opening the gate of the 20S proteasome via an interaction with its C-terminus, thereby allowing substrate entry and access to the site of proteolysis. Thus, the C-termini of the proteasomal ATPase function like a 'key in a lock' to induce gate opening and therefore regulate proteolysis. Unfolding activity requires energy from ATP hydrolysis, whereas ATP binding alone promotes ATPase-20S proteasome association which triggers gate opening, and supports translocation of unfolded substrates. This is Proteasome-activating nucleotidase from Thermococcus kodakarensis (strain ATCC BAA-918 / JCM 12380 / KOD1) (Pyrococcus kodakaraensis (strain KOD1)).